A 282-amino-acid polypeptide reads, in one-letter code: sn-glycerol-3-phosphate transport system permease protein UgpE (282 aa).

The next 6 membrane-spanning stretches (helical) occupy residues 14-34 (LILILGIIIVAFPIYYTFVAS), 86-106 (MAIAVGKIIISFMSAFAIVFF), 112-132 (MFFFWMIFITLMLPVEVRILP), 146-168 (YAGLTLPLMASATATFLFRQFFL), 201-221 (IAALFVILSIYGWTQYLWPLL), and 248-268 (WNYVMVTAILAIIPPILVVVL). Positions 78-269 (LWNSFVVAMA…IPPILVVVLM (192 aa)) constitute an ABC transmembrane type-1 domain.

It belongs to the binding-protein-dependent transport system permease family. The complex is composed of two ATP-binding proteins (UgpC), two transmembrane proteins (UgpA and UgpE) and a solute-binding protein (UgpB).

It is found in the cell inner membrane. In terms of biological role, part of the ABC transporter complex UgpBAEC involved in sn-glycerol-3-phosphate (G3P) import. Probably responsible for the translocation of the substrate across the membrane. The chain is sn-glycerol-3-phosphate transport system permease protein UgpE (ugpE) from Brucella suis biovar 1 (strain 1330).